A 214-amino-acid chain; its full sequence is Killer cell lectin-like receptor subfamily B member 1 (214 aa).

Over 1–42 the chain is Cytoplasmic; it reads MDAPVLYAELNLAETRGLRCTSAPSLPQDACQGPGWHRVALK. A helical; Signal-anchor for type II membrane protein transmembrane segment spans residues 43-63; sequence LGCAGLIFLLMVLSVLVGFLV. At 64 to 214 the chain is on the extracellular side; the sequence is QKPLIEKCSV…WICQKTLKHV (151 aa). The 111-residue stretch at 98 to 208 folds into the C-type lectin domain; the sequence is HCDKCLFTSQ…CSSDNHWICQ (111 aa). 2 disulfide bridges follow: Cys-119/Cys-207 and Cys-186/Cys-199.

It is found in the membrane. This is Killer cell lectin-like receptor subfamily B member 1 (Klrb1) from Mus musculus (Mouse).